The primary structure comprises 662 residues: Glycogen debranching enzyme (662 aa).

The Nucleophile role is filled by Asp-338. Glu-373 serves as the catalytic Proton donor.

This sequence belongs to the glycosyl hydrolase 13 family.

The enzyme catalyses Hydrolysis of (1-&gt;6)-alpha-D-glucosidic linkages to branches with degrees of polymerization of three or four glucose residues in limit dextrin.. It functions in the pathway glycan degradation; glycogen degradation. Functionally, removes maltotriose and maltotetraose chains that are attached by 1,6-alpha-linkage to the limit dextrin main chain, generating a debranched limit dextrin. The polypeptide is Glycogen debranching enzyme (Yersinia pseudotuberculosis serotype O:1b (strain IP 31758)).